Reading from the N-terminus, the 93-residue chain is UPF0521 protein A (93 aa).

Residues 2–58 (SLKEVITSLKNDFHSINKEIDSMKENNEKQEDKIFQEIKKLKLEMELLRKDNLSFKT) are a coiled coil.

This sequence belongs to the UPF0521 family.

The chain is UPF0521 protein A from Dictyostelium discoideum (Social amoeba).